We begin with the raw amino-acid sequence, 245 residues long: Sugar fermentation stimulation protein homolog (245 aa).

It belongs to the SfsA family.

This is Sugar fermentation stimulation protein homolog from Rhodospirillum rubrum (strain ATCC 11170 / ATH 1.1.1 / DSM 467 / LMG 4362 / NCIMB 8255 / S1).